A 307-amino-acid chain; its full sequence is Serine/threonine-protein phosphatase 4 catalytic subunit (307 aa).

4 residues coordinate Mn(2+): D54, H56, D82, and N114. H115 functions as the Proton donor in the catalytic mechanism. Positions 164 and 238 each coordinate Mn(2+). L307 is modified (leucine methyl ester).

It belongs to the PPP phosphatase family. PP-4 (PP-X) subfamily. In terms of assembly, serine/threonine-protein phosphatase 4 (PP4) occurs in different assemblies of the catalytic and one or more regulatory subunits. The cofactor is Mn(2+).

It is found in the cytoplasm. Its subcellular location is the nucleus. The protein resides in the cytoskeleton. The protein localises to the microtubule organizing center. It localises to the centrosome. The enzyme catalyses O-phospho-L-seryl-[protein] + H2O = L-seryl-[protein] + phosphate. The catalysed reaction is O-phospho-L-threonyl-[protein] + H2O = L-threonyl-[protein] + phosphate. In terms of biological role, protein phosphatase that regulates many processes such as microtubule organization at centrosomes. The protein is Serine/threonine-protein phosphatase 4 catalytic subunit (ppp4c) of Xenopus laevis (African clawed frog).